Consider the following 157-residue polypeptide: MEKVPMTAEGYKALDEELKRLKTVERPAVIAAIAEARSHGDLSENAEYHAAKERQGWIEGQIAEIEDKMARAQVIDVSKLSGEQVKFGATVSLIDEDTEEEARYQIVGEHEADVKAGRVSVTSPIARAIIGKETGDVVEVNTPGGVKAYEITKVEWV.

This sequence belongs to the GreA/GreB family.

Necessary for efficient RNA polymerase transcription elongation past template-encoded arresting sites. The arresting sites in DNA have the property of trapping a certain fraction of elongating RNA polymerases that pass through, resulting in locked ternary complexes. Cleavage of the nascent transcript by cleavage factors such as GreA or GreB allows the resumption of elongation from the new 3'terminus. GreA releases sequences of 2 to 3 nucleotides. The protein is Transcription elongation factor GreA of Phenylobacterium zucineum (strain HLK1).